A 340-amino-acid chain; its full sequence is Glyceraldehyde-3-phosphate dehydrogenase (340 aa).

NAD(+) is bound by residues 11–12 (SI) and Gly111. D-glyceraldehyde 3-phosphate is bound at residue 140 to 142 (SCN). The active-site Nucleophile is the Cys141. Position 169 (Arg169) interacts with NAD(+). 195 to 196 (HG) contacts D-glyceraldehyde 3-phosphate. Residue Gln303 coordinates NAD(+).

This sequence belongs to the glyceraldehyde-3-phosphate dehydrogenase family. As to quaternary structure, homotetramer.

Its subcellular location is the cytoplasm. The catalysed reaction is D-glyceraldehyde 3-phosphate + phosphate + NADP(+) = (2R)-3-phospho-glyceroyl phosphate + NADPH + H(+). It carries out the reaction D-glyceraldehyde 3-phosphate + phosphate + NAD(+) = (2R)-3-phospho-glyceroyl phosphate + NADH + H(+). It participates in carbohydrate degradation; glycolysis; pyruvate from D-glyceraldehyde 3-phosphate: step 1/5. The chain is Glyceraldehyde-3-phosphate dehydrogenase from Methanococcus maripaludis (strain C7 / ATCC BAA-1331).